Consider the following 102-residue polypeptide: C-X-C motif chemokine 10 (102 aa).

An N-terminal signal peptide occupies residues 1-19 (MNKSGFLIFCLILLTLSQG). Residue Arg24 is modified to Citrulline. 2 disulfides stabilise this stretch: Cys28–Cys55 and Cys30–Cys72.

It belongs to the intercrine alpha (chemokine CxC) family. As to quaternary structure, monomer, dimer, and tetramer. Interacts with CXCR3 (via N-terminus).

The protein resides in the secreted. In terms of biological role, pro-inflammatory cytokine that is involved in a wide variety of processes such as chemotaxis, differentiation, and activation of peripheral immune cells, regulation of cell growth, apoptosis and modulation of angiostatic effects. Plays thereby an important role during viral infections by stimulating the activation and migration of immune cells to the infected sites. Mechanistically, binding of CXCL10 to the CXCR3 receptor activates G protein-mediated signaling and results in downstream activation of phospholipase C-dependent pathway, an increase in intracellular calcium production and actin reorganization. In turn, recruitment of activated Th1 lymphocytes occurs at sites of inflammation. Activation of the CXCL10/CXCR3 axis also plays an important role in neurons in response to brain injury for activating microglia, the resident macrophage population of the central nervous system, and directing them to the lesion site. This recruitment is an essential element for neuronal reorganization. The protein is C-X-C motif chemokine 10 (CXCL10) of Bos taurus (Bovine).